Reading from the N-terminus, the 289-residue chain is 4-hydroxy-3-methylbut-2-enyl diphosphate reductase (289 aa).

A [4Fe-4S] cluster-binding site is contributed by Cys-13. (2E)-4-hydroxy-3-methylbut-2-enyl diphosphate is bound by residues His-41 and His-75. Dimethylallyl diphosphate contacts are provided by His-41 and His-75. 2 residues coordinate isopentenyl diphosphate: His-41 and His-75. Cys-97 is a binding site for [4Fe-4S] cluster. His-129 contacts (2E)-4-hydroxy-3-methylbut-2-enyl diphosphate. Position 129 (His-129) interacts with dimethylallyl diphosphate. His-129 contributes to the isopentenyl diphosphate binding site. Glu-131 functions as the Proton donor in the catalytic mechanism. (2E)-4-hydroxy-3-methylbut-2-enyl diphosphate is bound at residue Thr-167. Residue Cys-198 coordinates [4Fe-4S] cluster. 4 residues coordinate (2E)-4-hydroxy-3-methylbut-2-enyl diphosphate: Ser-226, Ser-227, Asn-228, and Ser-270. Residues Ser-226, Ser-227, Asn-228, and Ser-270 each coordinate dimethylallyl diphosphate. Isopentenyl diphosphate is bound by residues Ser-226, Ser-227, Asn-228, and Ser-270.

Belongs to the IspH family. The cofactor is [4Fe-4S] cluster.

It carries out the reaction isopentenyl diphosphate + 2 oxidized [2Fe-2S]-[ferredoxin] + H2O = (2E)-4-hydroxy-3-methylbut-2-enyl diphosphate + 2 reduced [2Fe-2S]-[ferredoxin] + 2 H(+). It catalyses the reaction dimethylallyl diphosphate + 2 oxidized [2Fe-2S]-[ferredoxin] + H2O = (2E)-4-hydroxy-3-methylbut-2-enyl diphosphate + 2 reduced [2Fe-2S]-[ferredoxin] + 2 H(+). Its pathway is isoprenoid biosynthesis; dimethylallyl diphosphate biosynthesis; dimethylallyl diphosphate from (2E)-4-hydroxy-3-methylbutenyl diphosphate: step 1/1. It functions in the pathway isoprenoid biosynthesis; isopentenyl diphosphate biosynthesis via DXP pathway; isopentenyl diphosphate from 1-deoxy-D-xylulose 5-phosphate: step 6/6. In terms of biological role, catalyzes the conversion of 1-hydroxy-2-methyl-2-(E)-butenyl 4-diphosphate (HMBPP) into a mixture of isopentenyl diphosphate (IPP) and dimethylallyl diphosphate (DMAPP). Acts in the terminal step of the DOXP/MEP pathway for isoprenoid precursor biosynthesis. This chain is 4-hydroxy-3-methylbut-2-enyl diphosphate reductase, found in Bacteroides thetaiotaomicron (strain ATCC 29148 / DSM 2079 / JCM 5827 / CCUG 10774 / NCTC 10582 / VPI-5482 / E50).